The following is a 384-amino-acid chain: MRVIGLMSGTSYDAIDAAAADLGLAGDRLVLKPLGLMSEAYDSGLREELAAALPPAATSLAGVCRLDTRIGQAFAAAAVRADRELCGGRAELVASHGQTVYHWAEAGRVYGTLQLGQPAWIAEATGLPVVADFRPRDIAAGGQGAPLVSLVDLLWLRGRAGTSVALNLGGIANLTAPDGTAFDTGPACALIDAAAHGLSGGRLDHDVDGALAARGTVHEPMLRRLLAEPYYALPAPKTTGKELFHLGYLRDALAGFGTLTAEDVIATLTRLTALTVADAVRAVRATEVVASGGGTRNPVLMEMLARELGAVALRTSDELGLPSAAKEAYAFAVLGFLTVHGLAGTDPVSTGARHPSVLGSVTPGRDGLRLPPRADWSPVRLVLE.

An ATP-binding site is contributed by Gly-9–Asp-16.

Belongs to the anhydro-N-acetylmuramic acid kinase family.

The enzyme catalyses 1,6-anhydro-N-acetyl-beta-muramate + ATP + H2O = N-acetyl-D-muramate 6-phosphate + ADP + H(+). It participates in amino-sugar metabolism; 1,6-anhydro-N-acetylmuramate degradation. It functions in the pathway cell wall biogenesis; peptidoglycan recycling. Catalyzes the specific phosphorylation of 1,6-anhydro-N-acetylmuramic acid (anhMurNAc) with the simultaneous cleavage of the 1,6-anhydro ring, generating MurNAc-6-P. Is required for the utilization of anhMurNAc either imported from the medium or derived from its own cell wall murein, and thus plays a role in cell wall recycling. This chain is Anhydro-N-acetylmuramic acid kinase, found in Streptomyces avermitilis (strain ATCC 31267 / DSM 46492 / JCM 5070 / NBRC 14893 / NCIMB 12804 / NRRL 8165 / MA-4680).